A 1030-amino-acid chain; its full sequence is MMS19 nucleotide excision repair protein homolog (1030 aa).

Residue A2 is modified to N-acetylalanine. 4 HEAT repeats span residues 866 to 904, 908 to 946, 949 to 987, and 990 to 1028; these read QRFFTDNVPALVRGFHAAPQDVKPNYLKGLSHVLNRLPK, LPELPTLLSLLLEALSCPDSVVQLSTLSCLQPLLLEAPQ, SLHVDTLITKFLNLSASPSMAVRIAALQCMHALTRLPTP, and LPYKPQVIRALAKPLDDKKRLVRKEAVSARGEWFLLGSP. Phosphoserine is present on S1027.

Belongs to the MET18/MMS19 family. In terms of assembly, component of the CIA complex. In the CIA complex, interacts directly with CIAO2B and CIAO3. Component of the MMXD complex, composed of CIAO1, ERCC2, CIAO2B, MMS19 and SLC25A5. Interacts with CIAO2B; the interaction is direct. Interacts with ERCC2/XPD; the interaction is direct. Interacts with ERCC3/XPB and NCOA3/RAC3. Interacts with RTEL1; the interaction mediates the association of RTEL1 with the CIA complex. Interacts with BRIP1. Interacts with KIF4A; the interaction facilitates the transfer of Fe-S clusters to KIF4A to ensure proper localization of KIF4A to the mitotic machinery components. Interacts with CCDC117; the interaction is indirect. In terms of processing, ubiquitinated; undergoes 'Lys-48'-linked polyubiquitination.

The protein resides in the nucleus. It is found in the cytoplasm. The protein localises to the cytoskeleton. It localises to the spindle. Key component of the cytosolic iron-sulfur protein assembly (CIA) complex, a multiprotein complex that mediates the incorporation of iron-sulfur cluster into apoproteins specifically involved in DNA metabolism and genomic integrity. In the CIA complex, MMS19 acts as an adapter between early-acting CIA components and a subset of cellular target Fe/S proteins such as ERCC2/XPD, FANCJ and RTEL1, thereby playing a key role in nucleotide excision repair (NER), homologous recombination-mediated double-strand break DNA repair, DNA replication and RNA polymerase II (POL II) transcription. As a CIA complex component and in collaboration with CIAO1 and CIAO2, binds to and facilitates the assembly of most cytosolic-nuclear Fe/S proteins. As part of the mitotic spindle-associated MMXD complex, plays a role in chromosome segregation, probably by facilitating iron-sulfur cluster assembly into ERCC2/XPD. Together with CIAO2, facilitates the transfer of Fe-S clusters to the motor protein KIF4A, which ensures proper localization of KIF4A to mitotic machinery components to promote the progression of mitosis. Indirectly acts as a transcriptional coactivator of estrogen receptor (ER), via its role in iron-sulfur insertion into some component of the TFIIH-machinery. The sequence is that of MMS19 nucleotide excision repair protein homolog from Bos taurus (Bovine).